The primary structure comprises 331 residues: Pantothenate kinase (331 aa).

Gly109 to Ser116 serves as a coordination point for ATP.

It belongs to the prokaryotic pantothenate kinase family.

It is found in the cytoplasm. The catalysed reaction is (R)-pantothenate + ATP = (R)-4'-phosphopantothenate + ADP + H(+). It participates in cofactor biosynthesis; coenzyme A biosynthesis; CoA from (R)-pantothenate: step 1/5. In Rhizobium johnstonii (strain DSM 114642 / LMG 32736 / 3841) (Rhizobium leguminosarum bv. viciae), this protein is Pantothenate kinase.